The chain runs to 411 residues: Corticotropin-releasing factor receptor 2 (411 aa).

Residues 1–19 (MDAALLLSLLEANCSLALA) constitute a signal peptide (not cleaved). Over 1–108 (MDAALLLSLL…EPILDDKQRK (108 aa)) the chain is Extracellular. Residues N13, N41, N74, N86, and N94 are each glycosylated (N-linked (GlcNAc...) asparagine). 3 disulfide bridges follow: C14–C50, C40–C83, and C64–C98. Residues 109–139 (YDLHYRIALIVNYLGHCVSVVALVAAFLLFL) form a helical membrane-spanning segment. The Cytoplasmic segment spans residues 140–146 (VLRSIRC). Residues 147–171 (LRNVIHWNLITTFILRNIAWFLLQL) form a helical membrane-spanning segment. At 172–185 (IDHEVHEGNEVWCR) the chain is on the extracellular side. An intrachain disulfide couples C184 to C254. A helical transmembrane segment spans residues 186–214 (CITTIFNYFVVTNFFWMFVEGCYLHTAIV). Over 215 to 221 (MTYSTEH) the chain is Cytoplasmic. The chain crosses the membrane as a helical span at residues 222-249 (LRKWLFLFIGWCIPCPIIIAWAVGKLYY). The Extracellular portion of the chain corresponds to 250 to 265 (ENEQCWFGKEAGDLVD). Residues 266-291 (YIYQGPVMLVLLINFVFLFNIVRILM) form a helical membrane-spanning segment. At 292–302 (TKLRASTTSET) the chain is on the cytoplasmic side. Residues 303–327 (IQYRKAVKATLVLLPLLGITYMLFF) traverse the membrane as a helical segment. Topologically, residues 328–334 (VNPGEDD) are extracellular. A helical transmembrane segment spans residues 335–364 (LSQIVFIYFNSFLQSFQGFFVSVFYCFFNG). Residues 365–411 (EVRAALRKRWHRWQDHHALRVPVARAMSIPTSPTRISFHSIKQTAAV) lie on the Cytoplasmic side of the membrane.

This sequence belongs to the G-protein coupled receptor 2 family. In terms of assembly, monomer. Interacts with CRF, UCN, UCN2 and UCN3. An N-glycosylation site within the signal peptide impedes its proper cleavage and function. Highly expressed in the heart. Also expressed in lungs, skeletal muscle, gastrointestinal tract, epididymis, and brain.

The protein resides in the cell membrane. G-protein coupled receptor for CRH (corticotropin-releasing factor), UCN (urocortin), UCN2 and UCN3. Has high affinity for UCN. Ligand binding causes a conformation change that triggers signaling via guanine nucleotide-binding proteins (G proteins) and down-stream effectors, such as adenylate cyclase. Promotes the activation of adenylate cyclase, leading to increased intracellular cAMP levels. The polypeptide is Corticotropin-releasing factor receptor 2 (Crhr2) (Mus musculus (Mouse)).